The sequence spans 364 residues: tRNA(Met) cytidine acetate ligase (364 aa).

ATP is bound by residues 7–20 (IAEF…HKYL), Gly96, Asn152, and Arg175.

The protein belongs to the TmcAL family.

Its subcellular location is the cytoplasm. It catalyses the reaction cytidine(34) in elongator tRNA(Met) + acetate + ATP = N(4)-acetylcytidine(34) in elongator tRNA(Met) + AMP + diphosphate. Its function is as follows. Catalyzes the formation of N(4)-acetylcytidine (ac(4)C) at the wobble position of elongator tRNA(Met), using acetate and ATP as substrates. First activates an acetate ion to form acetyladenylate (Ac-AMP) and then transfers the acetyl group to tRNA to form ac(4)C34. The chain is tRNA(Met) cytidine acetate ligase from Streptococcus sanguinis (strain SK36).